The chain runs to 1140 residues: Chromosome partition protein Smc (1140 aa).

ATP is bound at residue 34–41 (PNGSGKSN). Residues 160 to 484 (VDQFDSEIER…EKEASAKIAS (325 aa)) adopt a coiled-coil conformation. Positions 502–619 (EGVIGLVRDL…VQDIDAGRRL (118 aa)) constitute an SMC hinge domain. Residues 660–990 (LEGMKIQLSS…MLNEKKREVF (331 aa)) adopt a coiled-coil conformation.

Belongs to the SMC family. In terms of assembly, homodimer.

Its subcellular location is the cytoplasm. Required for chromosome condensation and partitioning. The polypeptide is Chromosome partition protein Smc (Thermoplasma acidophilum (strain ATCC 25905 / DSM 1728 / JCM 9062 / NBRC 15155 / AMRC-C165)).